A 427-amino-acid chain; its full sequence is Trigger factor (427 aa).

The region spanning 163 to 248 (GDTVVIDFVG…VNEVKAKEVP (86 aa)) is the PPIase FKBP-type domain.

It belongs to the FKBP-type PPIase family. Tig subfamily.

The protein localises to the cytoplasm. The catalysed reaction is [protein]-peptidylproline (omega=180) = [protein]-peptidylproline (omega=0). In terms of biological role, involved in protein export. Acts as a chaperone by maintaining the newly synthesized protein in an open conformation. Functions as a peptidyl-prolyl cis-trans isomerase. This is Trigger factor from Streptococcus thermophilus (strain CNRZ 1066).